We begin with the raw amino-acid sequence, 179 residues long: SCAN domain-containing protein 1 (179 aa).

Positions 1 to 108 (MAATEPILAA…GSRLGPETFR (108 aa)) are disordered. The segment covering 60–80 (AIPTPQAAASAAPELPLGPAP) has biased composition (low complexity). An SCAN box domain is found at 108–166 (RQRFRQFRYQDAAGPREAFRQLRELSRQWLRPDIRTKEQIVEMLVQEQLLAILPEAARA).

As to quaternary structure, interacts with ZNF202.

It is found in the nucleus. Functionally, may regulate transcriptional activity. The protein is SCAN domain-containing protein 1 (SCAND1) of Pongo pygmaeus (Bornean orangutan).